The primary structure comprises 252 residues: Ubiquinone/menaquinone biosynthesis C-methyltransferase UbiE (252 aa).

Residues Thr-75, Asp-96, and 123–124 (NA) contribute to the S-adenosyl-L-methionine site.

It belongs to the class I-like SAM-binding methyltransferase superfamily. MenG/UbiE family.

The enzyme catalyses a 2-demethylmenaquinol + S-adenosyl-L-methionine = a menaquinol + S-adenosyl-L-homocysteine + H(+). It carries out the reaction a 2-methoxy-6-(all-trans-polyprenyl)benzene-1,4-diol + S-adenosyl-L-methionine = a 5-methoxy-2-methyl-3-(all-trans-polyprenyl)benzene-1,4-diol + S-adenosyl-L-homocysteine + H(+). Its pathway is quinol/quinone metabolism; menaquinone biosynthesis; menaquinol from 1,4-dihydroxy-2-naphthoate: step 2/2. It participates in cofactor biosynthesis; ubiquinone biosynthesis. In terms of biological role, methyltransferase required for the conversion of demethylmenaquinol (DMKH2) to menaquinol (MKH2) and the conversion of 2-polyprenyl-6-methoxy-1,4-benzoquinol (DDMQH2) to 2-polyprenyl-3-methyl-6-methoxy-1,4-benzoquinol (DMQH2). The chain is Ubiquinone/menaquinone biosynthesis C-methyltransferase UbiE from Methylobacterium nodulans (strain LMG 21967 / CNCM I-2342 / ORS 2060).